The primary structure comprises 169 residues: Disulfide bond formation protein B (169 aa).

Residues 1-13 (MQSLISFAHSRLS) lie on the Cytoplasmic side of the membrane. The helical transmembrane segment at 14-30 (WGILALSALALESAALY) threads the bilayer. The Periplasmic segment spans residues 31 to 48 (FQHIMKLDPCVMCIYQRV). Residues Cys-40 and Cys-43 are joined by a disulfide bond. The chain crosses the membrane as a helical span at residues 49–64 (AVFGLLGAGLFGFMAP). Residues 65-71 (ANRVIRA) lie on the Cytoplasmic side of the membrane. The chain crosses the membrane as a helical span at residues 72–89 (LGALLWGISAAWGLKLAL). Residues 90–144 (ELVDMQNNPNPFSTCSFLPEFPSWLQLHEWLPSVFMPTGMCTDIPWEFAGVTMGE) are Periplasmic-facing. Cys-104 and Cys-130 are oxidised to a cystine. Residues 145-163 (WMIVAFSVYLLAWLAFIVP) form a helical membrane-spanning segment. The Cytoplasmic segment spans residues 164–169 (MLKKSA).

It belongs to the DsbB family.

It localises to the cell inner membrane. Its function is as follows. Required for disulfide bond formation in some periplasmic proteins. Acts by oxidizing the DsbA protein. This is Disulfide bond formation protein B from Shewanella amazonensis (strain ATCC BAA-1098 / SB2B).